A 258-amino-acid chain; its full sequence is Snake venom serine protease 1 (258 aa).

The first 18 residues, M1–A18, serve as a signal peptide directing secretion. A propeptide spanning residues Q19–L24 is cleaved from the precursor. The Peptidase S1 domain maps to V25–A249. 6 disulfide bridges follow: C31–C163, C50–C66, C98–C256, C142–C210, C174–C189, and C200–C225. The N-linked (GlcNAc...) asparagine glycan is linked to N44. Catalysis depends on charge relay system residues H65 and D110. Residue S204 is the Charge relay system of the active site.

The protein belongs to the peptidase S1 family. Snake venom subfamily. In terms of assembly, monomer. In terms of tissue distribution, expressed by the venom gland.

It localises to the secreted. Its function is as follows. Snake venom serine protease that may act in the hemostasis system of the prey. The chain is Snake venom serine protease 1 (TLG1) from Craspedocephalus gramineus (Bamboo pit viper).